The primary structure comprises 436 residues: MQVSVESTSALERRMTVGVPAERIETEVNKRLQQTARRAKIPGFRPGKVPMSVIRQRYEASARQEAMGDLIQETFYEAVVEQKLNPAGSPSVEPKSFEKGKDLEYIATFEVFPEFTVSGLEGIKIERLQAEVADADVDNMLDVLRKQNTRFEVVERAAQNDDQLNIDFVGKIDGEAFAGGSAKGTLLVLGSGRMIAGFEEGLVGAKAGEERVLNLTFPEDYQNLDLANKPAEFTVTVNSVAEPKLPELNEEFFALFGVKETGLDGFRAEVQKNMERELRQAIKSKVKNQVMEGLLQANPIEVPKALIGNEVNRLRVQAVQQFGGNIKPDQLPAELFEEQAKRRVVLGLIVAEVVKQHELKADEGRVREMIEEMASAYQEPEQVVAWYFKNEPQLNEVRSVVLEEQVVDTVLQKATVTDKQVSYEEAVKPAEAPQAA.

In terms of domain architecture, PPIase FKBP-type spans 161-246; it reads DDQLNIDFVG…VNSVAEPKLP (86 aa).

The protein belongs to the FKBP-type PPIase family. Tig subfamily.

It is found in the cytoplasm. It carries out the reaction [protein]-peptidylproline (omega=180) = [protein]-peptidylproline (omega=0). In terms of biological role, involved in protein export. Acts as a chaperone by maintaining the newly synthesized protein in an open conformation. Functions as a peptidyl-prolyl cis-trans isomerase. In Pseudomonas paraeruginosa (strain DSM 24068 / PA7) (Pseudomonas aeruginosa (strain PA7)), this protein is Trigger factor.